The primary structure comprises 882 residues: DNA mismatch repair protein MutS (882 aa).

656-663 (GPNASGKS) contacts ATP.

Belongs to the DNA mismatch repair MutS family.

Functionally, this protein is involved in the repair of mismatches in DNA. It is possible that it carries out the mismatch recognition step. This protein has a weak ATPase activity. The protein is DNA mismatch repair protein MutS of Synechococcus elongatus (strain ATCC 33912 / PCC 7942 / FACHB-805) (Anacystis nidulans R2).